The following is a 283-amino-acid chain: Hydrogenase expression/formation protein HoxQ (283 aa).

Positions 1-29 are disordered; sequence MNDDLPILPPGFGPGSHGEEERPDCPSMP.

It belongs to the HupH/HyaF family.

The protein is Hydrogenase expression/formation protein HoxQ (hoxQ) of Azotobacter vinelandii.